We begin with the raw amino-acid sequence, 480 residues long: Coronin-2B (480 aa).

5 WD repeats span residues 85–125 (GHQG…LKRN), 135–177 (GHSR…KMID), 179–217 (HRDV…VLQE), 220–263 (CKTH…MPVT), and 265–308 (EEID…PYLT). The stretch at 436–475 (NELLRMFFRQQEEIRRLKEQLSQRDLLVRQLELELKNLRN) forms a coiled coil.

This sequence belongs to the WD repeat coronin family.

It is found in the cytoplasm. Its subcellular location is the cytoskeleton. Functionally, may play a role in the reorganization of neuronal actin structure. This is Coronin-2B (coro2b) from Xenopus tropicalis (Western clawed frog).